Reading from the N-terminus, the 892-residue chain is Alanine--tRNA ligase (892 aa).

4 residues coordinate Zn(2+): His578, His582, Cys681, and His685.

This sequence belongs to the class-II aminoacyl-tRNA synthetase family. Requires Zn(2+) as cofactor.

Its subcellular location is the cytoplasm. The catalysed reaction is tRNA(Ala) + L-alanine + ATP = L-alanyl-tRNA(Ala) + AMP + diphosphate. Its function is as follows. Catalyzes the attachment of alanine to tRNA(Ala) in a two-step reaction: alanine is first activated by ATP to form Ala-AMP and then transferred to the acceptor end of tRNA(Ala). Also edits incorrectly charged Ser-tRNA(Ala) and Gly-tRNA(Ala) via its editing domain. The protein is Alanine--tRNA ligase of Cutibacterium acnes (strain DSM 16379 / KPA171202) (Propionibacterium acnes).